The following is a 288-amino-acid chain: Heme oxygenase 1 (288 aa).

At 1–265 (MERPQPDSMP…KTPLNTHSQA (265 aa)) the chain is on the cytoplasmic side. Lys18, His25, Tyr134, and Arg183 together coordinate heme b. The segment at 223-260 (HDTKDQSPSRAPGLRQRASNKAQDSAPVETPRGKTPLN) is disordered. Ser229 is modified (phosphoserine). Residues 266 to 288 (PLLRWVLTLSFLVATVAVGLYAM) traverse the membrane as a helical; Anchor for type IV membrane protein segment.

The protein belongs to the heme oxygenase family. Homodimer and higher order homooligomer. Oligomerization is crucial for its stability and function in the endoplasmic reticulum. Interacts with FLVCR2; this interaction is potentiated in the presence of heme. In terms of processing, a soluble form arises by proteolytic removal of the membrane anchor.

It localises to the endoplasmic reticulum membrane. It catalyses the reaction heme b + 3 reduced [NADPH--hemoprotein reductase] + 3 O2 = biliverdin IXalpha + CO + Fe(2+) + 3 oxidized [NADPH--hemoprotein reductase] + 3 H2O + H(+). In terms of biological role, catalyzes the oxidative cleavage of heme at the alpha-methene bridge carbon, released as carbon monoxide (CO), to generate biliverdin IXalpha, while releasing the central heme iron chelate as ferrous iron. Affords protection against programmed cell death and this cytoprotective effect relies on its ability to catabolize free heme and prevent it from sensitizing cells to undergo apoptosis. Catalyzes the oxidative cleavage of heme at the alpha-methene bridge carbon, released as carbon monoxide (CO), to generate biliverdin IXalpha, while releasing the central heme iron chelate as ferrous iron. This is Heme oxygenase 1 (HMOX1) from Pongo abelii (Sumatran orangutan).